A 401-amino-acid chain; its full sequence is Phosphoglycerate kinase (401 aa).

Residues 24-26 (DFN), R40, 63-66 (HFGR), R122, and R155 each bind substrate. ATP is bound by residues K206, G297, E328, and 357–360 (GGDS).

Belongs to the phosphoglycerate kinase family. As to quaternary structure, monomer.

The protein resides in the cytoplasm. It carries out the reaction (2R)-3-phosphoglycerate + ATP = (2R)-3-phospho-glyceroyl phosphate + ADP. The protein operates within carbohydrate degradation; glycolysis; pyruvate from D-glyceraldehyde 3-phosphate: step 2/5. This chain is Phosphoglycerate kinase, found in Acaryochloris marina (strain MBIC 11017).